A 62-amino-acid chain; its full sequence is Large ribosomal subunit protein bL28 (62 aa).

Belongs to the bacterial ribosomal protein bL28 family.

This chain is Large ribosomal subunit protein bL28, found in Koribacter versatilis (strain Ellin345).